A 324-amino-acid chain; its full sequence is tRNA dimethylallyltransferase (324 aa).

20-27 lines the ATP pocket; sequence GPTASGKS. 22-27 contacts substrate; sequence TASGKS. Interaction with substrate tRNA regions lie at residues 45–48, 168–172, and 284–291; these read DSAL, QRLIR, and KRQITWLR.

This sequence belongs to the IPP transferase family. Monomer. It depends on Mg(2+) as a cofactor.

It catalyses the reaction adenosine(37) in tRNA + dimethylallyl diphosphate = N(6)-dimethylallyladenosine(37) in tRNA + diphosphate. In terms of biological role, catalyzes the transfer of a dimethylallyl group onto the adenine at position 37 in tRNAs that read codons beginning with uridine, leading to the formation of N6-(dimethylallyl)adenosine (i(6)A). This chain is tRNA dimethylallyltransferase, found in Hydrogenovibrio crunogenus (strain DSM 25203 / XCL-2) (Thiomicrospira crunogena).